The following is a 37-amino-acid chain: Cytochrome b6-f complex subunit 5 (37 aa).

Residues leucine 5–alanine 25 form a helical membrane-spanning segment.

It belongs to the PetG family. The 4 large subunits of the cytochrome b6-f complex are cytochrome b6, subunit IV (17 kDa polypeptide, PetD), cytochrome f and the Rieske protein, while the 4 small subunits are PetG, PetL, PetM and PetN. The complex functions as a dimer.

Its subcellular location is the plastid. The protein localises to the chloroplast thylakoid membrane. Its function is as follows. Component of the cytochrome b6-f complex, which mediates electron transfer between photosystem II (PSII) and photosystem I (PSI), cyclic electron flow around PSI, and state transitions. PetG is required for either the stability or assembly of the cytochrome b6-f complex. The polypeptide is Cytochrome b6-f complex subunit 5 (Mesostigma viride (Green alga)).